Consider the following 446-residue polypeptide: Serine decarboxylase 3 (446 aa).

A substrate-binding site is contributed by His-162. An N6-(pyridoxal phosphate)lysine modification is found at Lys-274.

It belongs to the group II decarboxylase family. Pyridoxal 5'-phosphate serves as cofactor.

The enzyme catalyses L-serine + H(+) = ethanolamine + CO2. Catalyzes the biosynthesis of ethanolamine from serine. Decarboxylation of free serine is the major source of ethanolamine production in plants and ethanolamine metabolism is crucial for the synthesis of choline, phosphatidylethanolamine (PE) and phosphatidylcholine (PC), and thus for plant growth. The sequence is that of Serine decarboxylase 3 from Oryza sativa subsp. japonica (Rice).